A 2228-amino-acid polypeptide reads, in one-letter code: Genome polyprotein (2228 aa).

Residues 56 to 76 (AEVGAHQSEPLKTSVDKPGSK) are disordered. 2 consecutive short sequence motifs ((L)YPX(n)L motif) follow at residues 167 to 171 (YPHGL) and 200 to 205 (YPVWEL). Residues 766–836 (MLDRIALGDL…PRKIKGVFSQ (71 aa)) form an involved in P1-2A pentamerization region. A helical transmembrane segment spans residues 1011–1031 (TVEIINTVLCFVKSGILLYVI). The interval 1043–1070 (IGLLRVMNYADIGCSVISCGKVFSKMLE) is membrane-penetrating ability. A coiled-coil region spans residues 1127 to 1152 (NKKDVLNILKDNQQKIERAIEEADNF). The SF3 helicase domain occupies 1204–1366 (HQKLKNLGSI…SFFKNPHNDM (163 aa)). Residue 1230 to 1237 (GKRGGGKS) coordinates ATP. Residues 1462-1482 (WVAVGAAVGVLGVLVGGWYVY) traverse the membrane as a helical segment. Tyr1499 is modified (O-(5'-phospho-RNA)-tyrosine). Residues 1514-1728 (DPVESQSTLE…VAKLVTQEMF (215 aa)) form the Peptidase C3 domain. Residues His1563, Asp1603, and Cys1691 each act as for protease 3C activity in the active site. The 122-residue stretch at 1977–2098 (DVGLDLDFSA…VFSRQVQFDN (122 aa)) folds into the RdRp catalytic domain.

The protein belongs to the picornaviridae polyprotein family. Homodimer. Homomultimer; probably interacts with membranes in a multimeric form. Seems to assemble into amyloid-like fibers. In terms of assembly, homodimer. Monomer. Interacts with protein 3CD. As to quaternary structure, interacts with host ACBD3. Interacts with protein 3AB. In terms of assembly, interacts with human MAVS. As to quaternary structure, homodimer; disulfide-linked. Homopentamer. Homooligomer. In terms of assembly, interacts with capsid protein VP2. Interacts with capsid protein VP3. As to quaternary structure, interacts with capsid protein VP1. Interacts with capsid protein VP3. Interacts with capsid protein VP1. Interacts with capsid protein VP2. Post-translationally, specific enzymatic cleavages by viral protease in vivo yield a variety of precursors and mature proteins. Polyprotein processing intermediates are produced, such as P1-2A which is a functional precursor of the structural proteins, VP0 which is a VP4-VP2 precursor, VP1-2A precursor, 3ABC precursor which is a stable and catalytically active precursor of 3A, 3B and 3C proteins, 3AB and 3CD precursors. The assembly signal 2A is removed from VP1-2A by a host protease, possibly host Cathepsin L. This cleavage occurs over a region of 3 amino-acids probably generating VP1 proteins with heterogeneous C-termini. In terms of processing, during virion maturation, immature virions are rendered infectious following cleavage of VP0 into VP4 and VP2. This maturation seems to be an autocatalytic event triggered by the presence of RNA in the capsid and is followed by a conformational change of the particle. The assembly signal 2A is removed from VP1-2A by a host protease, possibly host Cathepsin L in naked virions. This cleavage does not occur in enveloped virions. This cleavage occurs over a region of 3 amino-acids probably generating VP1 proteins with heterogeneous C-termini. Post-translationally, VPg is uridylylated prior to priming replication into VPg-pUpU. In terms of processing, unlike other picornaviruses, does not seem to be myristoylated.

The protein resides in the virion. The protein localises to the host endosome. It is found in the host multivesicular body. It localises to the host membrane. Its subcellular location is the host mitochondrion outer membrane. The protein resides in the host cytoplasm. The protein localises to the host cytoplasmic vesicle membrane. It catalyses the reaction RNA(n) + a ribonucleoside 5'-triphosphate = RNA(n+1) + diphosphate. The enzyme catalyses a ribonucleoside 5'-triphosphate + H2O = a ribonucleoside 5'-diphosphate + phosphate + H(+). The catalysed reaction is Selective cleavage of Gln-|-Gly bond in the poliovirus polyprotein. In other picornavirus reactions Glu may be substituted for Gln, and Ser or Thr for Gly.. Capsid proteins VP1, VP2, and VP3 form a closed capsid enclosing the viral positive strand RNA genome. All these proteins contain a beta-sheet structure called beta-barrel jelly roll. Together they form an icosahedral capsid (T=3) composed of 60 copies of each VP1, VP2, and VP3, with a diameter of approximately 300 Angstroms. VP1 is situated at the 12 fivefold axes, whereas VP2 and VP3 are located at the quasi-sixfold axes. The naked capsid interacts with the host receptor HAVCR1 to provide virion attachment to and probably entry into the target cell. Its function is as follows. VP0 precursor is a component of the immature procapsids. Functionally, plays a role in the assembly of the 12 pentamers into an icosahedral structure. Has not been detected in mature virions, supposedly owing to its small size. In terms of biological role, precursor component of immature procapsids that corresponds to an extended form of the structural protein VP1. After maturation, possibly by the host Cathepsin L, the assembly signal 2A is cleaved to give rise to the mature VP1 protein. Functions as a viroporin. Affects membrane integrity and causes an increase in membrane permeability. Involved in host intracellular membrane rearrangements probably to give rise to the viral factories. Does not disrupt calcium homeostasis or glycoprotein trafficking. Antagonizes the innate immune response of the host by suppressing IFN-beta synthesis, which it achieves by interfering with the RIG-I/IFIH1 pathway. Its function is as follows. Affects membrane integrity and causes an increase in membrane permeability. Functionally, associates with and induces structural rearrangements of intracellular membranes. Displays RNA-binding activity. In terms of biological role, the precursor 3ABC is targeted to the mitochondrial membrane where protease 3C activity cleaves and inhibits the host antiviral protein MAVS, thereby disrupting activation of IRF3 through the IFIH1/MDA5 pathway. In vivo, the protease activity of 3ABC precursor is more efficient in cleaving the 2BC precursor than that of protein 3C. The 3ABC precursor may therefore play a role in the proteolytic processing of the polyprotein. Possible viroporin. Interacts with the 3CD precursor and with RNA structures found at both the 5'- and 3'-termini of the viral genome. Since the 3AB precursor contains the hydrophobic domain 3A, it probably anchors the whole viral replicase complex to intracellular membranes on which viral RNA synthesis occurs. Its function is as follows. May serve as membrane anchor to the 3AB and 3ABC precursors via its hydrophobic domain. May interact with RNA. Functionally, acts as a primer for viral RNA replication and remains covalently bound to viral genomic RNA. VPg is uridylylated prior to priming replication into VPg-pUpU. The VPg-pUpU is then used as primer on the genomic RNA poly(A) by the RNA-dependent RNA polymerase to replicate the viral genome. In terms of biological role, cysteine protease that generates mature viral proteins from the precursor polyprotein. In addition to its proteolytic activity, it binds to viral RNA, and thus influences viral genome replication. RNA and substrate bind cooperatively to the protease. Cleaves IKBKG/NEMO to impair innate immune signaling. Cleaves host PABPC1 which may participate in the switch of viral translation to RNA synthesis. Interacts with the 3AB precursor and with RNA structures found at both the 5'- and 3'-termini of the viral genome. Disrupts TLR3 signaling by degrading the host adapter protein TICAM1/TRIF. Its function is as follows. RNA-directed RNA polymerase 3D-POL replicates genomic and antigenomic RNA by recognizing replications specific signals. This Cercopithecus hamlyni (Owl-faced monkey) protein is Genome polyprotein.